A 99-amino-acid chain; its full sequence is uncharacterized protein (99 aa).

This is an uncharacterized protein from Acidianus bottle-shaped virus (isolate Italy/Pozzuoli) (ABV).